The primary structure comprises 529 residues: Bifunctional purine biosynthesis protein PurH (529 aa).

The region spanning 1-148 (MQQRRPIRRA…KNHKDVAIVV (148 aa)) is the MGS-like domain.

It belongs to the PurH family.

The catalysed reaction is (6R)-10-formyltetrahydrofolate + 5-amino-1-(5-phospho-beta-D-ribosyl)imidazole-4-carboxamide = 5-formamido-1-(5-phospho-D-ribosyl)imidazole-4-carboxamide + (6S)-5,6,7,8-tetrahydrofolate. It catalyses the reaction IMP + H2O = 5-formamido-1-(5-phospho-D-ribosyl)imidazole-4-carboxamide. It participates in purine metabolism; IMP biosynthesis via de novo pathway; 5-formamido-1-(5-phospho-D-ribosyl)imidazole-4-carboxamide from 5-amino-1-(5-phospho-D-ribosyl)imidazole-4-carboxamide (10-formyl THF route): step 1/1. Its pathway is purine metabolism; IMP biosynthesis via de novo pathway; IMP from 5-formamido-1-(5-phospho-D-ribosyl)imidazole-4-carboxamide: step 1/1. The polypeptide is Bifunctional purine biosynthesis protein PurH (Yersinia enterocolitica serotype O:8 / biotype 1B (strain NCTC 13174 / 8081)).